Reading from the N-terminus, the 332-residue chain is Hygromycin-B 7''-O-kinase (332 aa).

The active-site Proton acceptor is Asp223.

The protein belongs to the aminoglycoside phosphotransferase family.

It carries out the reaction hygromycin B + ATP = 7''-O-phosphohygromycin B + ADP + H(+). The aminoglycoside phosphotransferases achieve inactivation of their antibiotic substrates by phosphorylation. In Streptomyces hygroscopicus, this protein is Hygromycin-B 7''-O-kinase (hyg).